Reading from the N-terminus, the 827-residue chain is MMGRRGSSWCRWWVALLVLAVAADAVGCTSVSYDDRSLVIDGQRRIILSGSIHYPRSTPEMWPDLIKKAKEGGLDAIETYIFWNGHEPHRRQYNFEGNYDVVRFFKEIQNAGMYAILRIGPYICGEWNYGGLPAWLRDIPGMQFRLHNEPFENEMETFTTLIVNKMKDSKMFAEQGGPIILAQIENEYGNIMGKLNNNQSASEYIHWCADMANKQNVGVPWIMCQQDDDVPHNVVNTCNGFYCHDWFPNRTGIPKIWTENWTGWFKAWDKPDFHRSAEDIAFAVAMFFQKRGSLQNYYMYHGGTNFGRTSGGPYITTSYDYDAPLDEYGNLRQPKYGHLKELHSVLKSMEKTLVHGEYFDTNYGDNITVTKYTLDSSSACFINNRFDDKDVNVTLDGATHLLPAWSVSILPDCKTVAFNSAKIKTQTSVMVKKPNTAEQEQESLKWSWMPENLSPFMTDEKGNFRKNELLEQIVTSTDQSDYLWYRTSLNHKGEGSYKLYVNTTGHELYAFVNGKLIGKNHSADGDFVFQLESPVKLHDGKNYISLLSATVGLKNYGPSFEKMPTGIVGGPVKLIDSNGTAIDLSNSSWSYKAGLASEYRQIHLDKPGYKWNGNNGTIPINRPFTWYKATFEAPSGEDAVVVDLLGLNKGVAWVNGNNLGRYWPSYTAAEMAGCHRCDYRGAFQAEGDGTRCLTGCGEPSQRYYHVPRSFLAAGEPNTLLLFEEAGGDPSGVALRTVVPGAVCTSGEAGDAVTLSCGGGHAVSSVDVASFGVGRGRCGGYEGGCESKAAYEAFTAACVGKESCTVEITGAFAGAGCLSGVLTVQATC.

A signal peptide spans 1–25 (MMGRRGSSWCRWWVALLVLAVAADA). Catalysis depends on Glu-187, which acts as the Proton donor. Asn-198 and Asn-249 each carry an N-linked (GlcNAc...) asparagine glycan. Glu-259 functions as the Nucleophile in the catalytic mechanism. Asn-260, Asn-366, Asn-392, Asn-502, Asn-520, Asn-578, Asn-586, and Asn-615 each carry an N-linked (GlcNAc...) asparagine glycan. The SUEL-type lectin domain occupies 746–827 (GEAGDAVTLS…SGVLTVQATC (82 aa)).

It belongs to the glycosyl hydrolase 35 family.

Its subcellular location is the secreted. The protein resides in the extracellular space. The protein localises to the apoplast. It catalyses the reaction Hydrolysis of terminal non-reducing beta-D-galactose residues in beta-D-galactosides.. The sequence is that of Beta-galactosidase 1 from Oryza sativa subsp. japonica (Rice).